We begin with the raw amino-acid sequence, 68 residues long: Small proline-rich protein 2K (68 aa).

One copy of the 1; truncated repeat lies at 21-26; the sequence is PKPCSP. The interval 21-65 is 3.5 X 9 AA approximate tandem repeats; sequence PKPCSPPKCPEPCPPPKCPETCPPQPCQRKCPPVLEAPCQQKCPS. A run of 3 repeats spans residues 27–35, 36–44, and 45–53.

It belongs to the cornifin (SPRR) family. As to expression, not expressed in uterus.

Its subcellular location is the cytoplasm. Its function is as follows. Cross-linked envelope protein of keratinocytes. It is a keratinocyte protein that first appears in the cell cytosol, but ultimately becomes cross-linked to membrane proteins by transglutaminase. All that results in the formation of an insoluble envelope beneath the plasma membrane. The polypeptide is Small proline-rich protein 2K (Sprr2k) (Mus musculus (Mouse)).